Consider the following 821-residue polypeptide: Phenylalanine--tRNA ligase beta subunit (821 aa).

The tRNA-binding domain occupies 39–149 (SENVKGIVLG…EDIALNHNLG (111 aa)). Positions 414-507 (LKKILIPLRR…RLIGYDMFDL (94 aa)) constitute a B5 domain. Mg(2+)-binding residues include Asp485, Asp491, Glu494, and Glu495. One can recognise an FDX-ACB domain in the interval 727 to 820 (PTVPKMERDI…IEKKFSTKLR (94 aa)).

It belongs to the phenylalanyl-tRNA synthetase beta subunit family. Type 1 subfamily. In terms of assembly, tetramer of two alpha and two beta subunits. Requires Mg(2+) as cofactor.

Its subcellular location is the cytoplasm. It catalyses the reaction tRNA(Phe) + L-phenylalanine + ATP = L-phenylalanyl-tRNA(Phe) + AMP + diphosphate + H(+). This chain is Phenylalanine--tRNA ligase beta subunit, found in Prochlorococcus marinus subsp. pastoris (strain CCMP1986 / NIES-2087 / MED4).